The following is a 304-amino-acid chain: Ribosomal RNA large subunit methyltransferase F (304 aa).

It belongs to the methyltransferase superfamily. METTL16/RlmF family.

The protein localises to the cytoplasm. The enzyme catalyses adenosine(1618) in 23S rRNA + S-adenosyl-L-methionine = N(6)-methyladenosine(1618) in 23S rRNA + S-adenosyl-L-homocysteine + H(+). Functionally, specifically methylates the adenine in position 1618 of 23S rRNA. This is Ribosomal RNA large subunit methyltransferase F from Klebsiella pneumoniae (strain 342).